A 108-amino-acid polypeptide reads, in one-letter code: uncharacterized protein (108 aa).

The first 20 residues, 1 to 20, serve as a signal peptide directing secretion; sequence MNLKSIIFVLFIAFFAFSLA. An N-linked (GlcNAc...) asparagine glycan is attached at Asn39.

It belongs to the Dictyostelium gerABC family.

The protein localises to the secreted. This is an uncharacterized protein from Dictyostelium discoideum (Social amoeba).